A 177-amino-acid polypeptide reads, in one-letter code: ATP synthase subunit delta (177 aa).

This sequence belongs to the ATPase delta chain family. In terms of assembly, F-type ATPases have 2 components, F(1) - the catalytic core - and F(0) - the membrane proton channel. F(1) has five subunits: alpha(3), beta(3), gamma(1), delta(1), epsilon(1). F(0) has three main subunits: a(1), b(2) and c(10-14). The alpha and beta chains form an alternating ring which encloses part of the gamma chain. F(1) is attached to F(0) by a central stalk formed by the gamma and epsilon chains, while a peripheral stalk is formed by the delta and b chains.

The protein resides in the cell inner membrane. F(1)F(0) ATP synthase produces ATP from ADP in the presence of a proton or sodium gradient. F-type ATPases consist of two structural domains, F(1) containing the extramembraneous catalytic core and F(0) containing the membrane proton channel, linked together by a central stalk and a peripheral stalk. During catalysis, ATP synthesis in the catalytic domain of F(1) is coupled via a rotary mechanism of the central stalk subunits to proton translocation. Its function is as follows. This protein is part of the stalk that links CF(0) to CF(1). It either transmits conformational changes from CF(0) to CF(1) or is implicated in proton conduction. The polypeptide is ATP synthase subunit delta (Pectobacterium atrosepticum (strain SCRI 1043 / ATCC BAA-672) (Erwinia carotovora subsp. atroseptica)).